A 316-amino-acid polypeptide reads, in one-letter code: Formimidoylglutamase (316 aa).

Mn(2+) is bound by residues histidine 127, aspartate 156, histidine 158, aspartate 160, aspartate 247, and aspartate 249.

It belongs to the arginase family. It depends on Mn(2+) as a cofactor.

It carries out the reaction N-formimidoyl-L-glutamate + H2O = formamide + L-glutamate. Its pathway is amino-acid degradation; L-histidine degradation into L-glutamate; L-glutamate from N-formimidoyl-L-glutamate (hydrolase route): step 1/1. In terms of biological role, catalyzes the conversion of N-formimidoyl-L-glutamate to L-glutamate and formamide. In Cupriavidus pinatubonensis (strain JMP 134 / LMG 1197) (Cupriavidus necator (strain JMP 134)), this protein is Formimidoylglutamase.